The chain runs to 274 residues: Type III pantothenate kinase (274 aa).

6–13 is an ATP binding site; sequence DVRNTHTV. 109 to 112 provides a ligand contact to substrate; it reads GADR. D111 (proton acceptor) is an active-site residue. D131 serves as a coordination point for K(+). S134 lines the ATP pocket. T186 is a substrate binding site.

Belongs to the type III pantothenate kinase family. As to quaternary structure, homodimer. NH4(+) is required as a cofactor. Requires K(+) as cofactor.

It is found in the cytoplasm. It catalyses the reaction (R)-pantothenate + ATP = (R)-4'-phosphopantothenate + ADP + H(+). It participates in cofactor biosynthesis; coenzyme A biosynthesis; CoA from (R)-pantothenate: step 1/5. Functionally, catalyzes the phosphorylation of pantothenate (Pan), the first step in CoA biosynthesis. This chain is Type III pantothenate kinase, found in Mycobacterium leprae (strain Br4923).